The primary structure comprises 449 residues: Exodeoxyribonuclease 7 large subunit (449 aa).

Belongs to the XseA family. In terms of assembly, heterooligomer composed of large and small subunits.

The protein localises to the cytoplasm. It carries out the reaction Exonucleolytic cleavage in either 5'- to 3'- or 3'- to 5'-direction to yield nucleoside 5'-phosphates.. Functionally, bidirectionally degrades single-stranded DNA into large acid-insoluble oligonucleotides, which are then degraded further into small acid-soluble oligonucleotides. The chain is Exodeoxyribonuclease 7 large subunit from Aliivibrio fischeri (strain MJ11) (Vibrio fischeri).